The chain runs to 634 residues: Chaperone protein HtpG (634 aa).

The tract at residues 1-342 (MTVETDKQTL…SSDLSLNVSR (342 aa)) is a; substrate-binding. A b region spans residues 343-559 (EILQSGPVVD…QGDLGLQMRQ (217 aa)). The c stretch occupies residues 560-634 (LLEASGQAVP…LNKLLLELSA (75 aa)).

This sequence belongs to the heat shock protein 90 family. Homodimer.

It localises to the cytoplasm. Molecular chaperone. Has ATPase activity. This chain is Chaperone protein HtpG, found in Xanthomonas axonopodis pv. citri (strain 306).